Here is a 329-residue protein sequence, read N- to C-terminus: Secretory carrier-associated membrane protein 2 (329 aa).

2 disordered regions span residues 1–21 (MSAFDTNPFADPVDVNPFQDP) and 51–72 (VTQLPGSSQPAVLQPSVEPTQP). Residues 1–153 (MSAFDTNPFA…DYQRICKMLY (153 aa)) are Cytoplasmic-facing. The helical transmembrane segment at 154-174 (YLWMLHSVTLFLNLLACLAWF) threads the bilayer. At 175 to 181 (SGNSSKG) the chain is on the lumenal side. A helical transmembrane segment spans residues 182–202 (VDFGLSILWFLIFTPCAFLCW). Over 203–218 (YRPIYKAFRSDNSFSF) the chain is Cytoplasmic. The tract at residues 203 to 218 (YRPIYKAFRSDNSFSF) is interaction with SLC9A7. Residues 219-239 (FVFFFVFFCQIGIYIIQLVGI) form a helical membrane-spanning segment. The Lumenal portion of the chain corresponds to 240–262 (PGLGDSGWIAALSTLDNHSLAIS). Residues 263–283 (VIMMVVAGFFTLCAVLSVFLL) form a helical membrane-spanning segment. The Cytoplasmic segment spans residues 284–329 (QRVHSLYRRTGASFQQAQEEFSQGIFSSRTFHRAASSAAQGAFQGN). A phosphoserine mark is found at serine 319 and serine 320.

This sequence belongs to the SCAMP family. In terms of assembly, interacts with SLC6A4 and SLC9A7. Interacts with SLC9A5; this interaction regulates SLC9A5 cell-surface targeting and SLC9A5 activity. As to expression, widely expressed.

The protein localises to the golgi apparatus. It localises to the trans-Golgi network membrane. The protein resides in the recycling endosome membrane. Functionally, functions in post-Golgi recycling pathways. Acts as a recycling carrier to the cell surface. This chain is Secretory carrier-associated membrane protein 2 (SCAMP2), found in Homo sapiens (Human).